A 735-amino-acid chain; its full sequence is Post-transcriptional regulator MKT1 (735 aa).

The interaction with PBP1 stretch occupies residues 475–722; sequence QVIYNTMEET…ANERMKRAQK (248 aa).

Belongs to the XPG/RAD2 endonuclease family. Forms a complex composed of at least MKT1, PBP1, XAC1 and LSM12. Within the complex, interacts (via C-terminus) with PBP1; the interaction is direct. Interacts with RNA-binding protein ZC3H11 (via MKT1-binding motif); the interaction is direct. May interact with RNA-binding proteins CFB1 and CFB2. Interacts with the EIF4E6-EIF4G5 translation initiation complex via EIF4G5; the interaction with EIF4G5 is direct.

It localises to the cytoplasm. The protein resides in the cytosol. Its subcellular location is the stress granule. In terms of biological role, involved in post-transcriptional regulation of gene expression. Promotes mRNA stabilization by recruiting a complex containing PBP1, LSM12 and XAC1 to mRNAs. Recruited to mRNAs by sequence-specific RNA binding proteins. May regulate translation through interactions with the EIF4E6-EIF4G5 translation initiation complex. This chain is Post-transcriptional regulator MKT1, found in Trypanosoma brucei brucei (strain 927/4 GUTat10.1).